The following is a 983-amino-acid chain: Receptor-type tyrosine-protein phosphatase-like N (983 aa).

The signal sequence occupies residues 1-40 (MRRPRRPGGPAGCGGSEGSGGLRLLVCLLLLSGRPGGCSA). The interval 41–137 (ISAHGCLFDR…HPRDRSGSVP (97 aa)) is RESP18 homology domain. The Lumenal portion of the chain corresponds to 41–579 (ISAHGCLFDR…RQAHGISPMR (539 aa)). The cysteines at positions 59 and 68 are disulfide-linked. The span at 118-133 (RIPRLRPPEPHPRDRS) shows a compositional bias: basic and acidic residues. Disordered regions lie at residues 118–179 (RIPR…SPLS), 293–330 (RARAPRLPEEGGSSRAEDSSEGHEEEVLGGHGEKSPPQ), and 399–420 (GDTADARPPTPLLPGHPTASST). A compositionally biased stretch (polar residues) spans 148-158 (SQGNPTGSSPA). Basic and acidic residues predominate over residues 307 to 326 (RAEDSSEGHEEEVLGGHGEK). A phosphoserine mark is found at serine 311 and serine 312. The segment at 453–579 (SPLGQSQPTV…RQAHGISPMR (127 aa)) is sufficient for dimerization of proICA512. N-linked (GlcNAc...) asparagine glycosylation is found at asparagine 510 and asparagine 528. The chain crosses the membrane as a helical span at residues 580–604 (SLLLTLVALAGVAGLLVALAVALCM). The sufficient for dimerization of proICA512 stretch occupies residues 605–736 (RHHSKQRDKE…PNTCATAQGE (132 aa)). The Cytoplasmic segment spans residues 605–983 (RHHSKQRDKE…VNAILKALPQ (379 aa)). Residues 648–684 (RAEGQPEPSRVSSVSSQFSDAAQASPSSHSSTPSWCE) are disordered. Over residues 652–681 (QPEPSRVSSVSSQFSDAAQASPSSHSSTPS) the composition is skewed to low complexity. The 261-residue stretch at 713–973 (LAKEWQALCA…EFALTAVAEE (261 aa)) folds into the Tyrosine-protein phosphatase domain. A Glycyl lysine isopeptide (Lys-Gly) (interchain with G-Cter in SUMO) cross-link involves residue lysine 758.

Belongs to the protein-tyrosine phosphatase family. Receptor class 8 subfamily. Homodimer; shown for the unprocessed protein (proICA512) in the endoplasmic reticulum and resolved during protein maturation as ICA512-TMF seems to be predominantly monomeric in secretory granules; however, ICA512-CCF interacts with ICA512-TMF disrupting the ICA512-TMF:SNTB2 complex. The isolated lumenal RESP18 homology domain has been shown to form disulfide-linked homooligomers. Interacts (via cytoplasmic domain) with phosphorylated SNTB2; this protects PTPRN against cleavage by CAPN1 to produce ICA512-CCF. Dephosphorylation of SNTB2 upon insulin stimulation disrupts the interaction and results in PTPRN cleavage. Interacts with SNX19. ICA512-CCF interacts with PIAS4; in the nucleus. Interacts with STAT5B (phosphorylated); down-regulated by ICA512-CCF sumoylation; ICA512-CCF prevents STAT5B dephosphorylation; ICA512-CCF mediates interaction of STAT5B with PIAS4. Interacts (via RESP18 homology domain) with insulin and proinsulin. Interacts with PTPRN2, PTPRA and PTPRE. Subject to proteolytic cleavage at multiple sites. Subject to cleavage on a pair of basic residues. Following exocytosis of secretory granules in pancreatic beta-cells ICA512-TMF located in the plasma-membrane is cleaved by mu-type calpain CPN1 to yield ICA512-CCF. In terms of processing, N-glycosylated. Post-translationally, O-glycosylated. Sumoylated at two sites including Lys-758. Sumoylation decreases interaction with STAT5. In terms of tissue distribution, detected in pancreas islets. Detected in pancreas alpha, beta and delta cells, and in chromaffin cells in the adrenal medulla. Detected in amygdala, hypothalamus, autonomous nerve fibers and ganglia, especially at synaptic contacts. Detected in pituitary (at protein level). Detected in brain, specifically in cerebral cortex, diencephalon and brain stem.

The protein resides in the membrane. It is found in the cytoplasmic vesicle. Its subcellular location is the secretory vesicle membrane. The protein localises to the perikaryon. It localises to the cell projection. The protein resides in the axon. It is found in the synapse. Its subcellular location is the cell membrane. The protein localises to the endosome. It localises to the nucleus. Its function is as follows. Plays a role in vesicle-mediated secretory processes. Required for normal accumulation of secretory vesicles in hippocampus, pituitary and pancreatic islets. Required for the accumulation of normal levels of insulin-containing vesicles and preventing their degradation. Plays a role in insulin secretion in response to glucose stimuli. Required for normal accumulation of the neurotransmitters norepinephrine, dopamine and serotonin in the brain. In females, but not in males, required for normal accumulation and secretion of pituitary hormones, such as luteinizing hormone (LH) and follicle-stimulating hormone (FSH). Required to maintain normal levels of renin expression and renin release. Seems to lack intrinsic enzyme activity. ICA512-TMF regulates dynamics and exocytosis of insulin secretory granules (SGs); binding of ICA512-TMF to SNTB2/beta-2-syntrophin is proposed to restrain SGs mobility and exocytosis by tethering them to the actin cytoskeleton depending on UTRN; the function is inhibited by cytoplasmic ICA512-CFF dimerizing with ICA512-TMF and displacing SNTB2. In terms of biological role, ICA512-CCF translocated to the nucleus promotes expression of insulin and other granule-related genes; the function implicates binding to and regulating activity of STAT5B probably by preventing its dephosphorylation and potentially by inducing its sumoylation by recruiting PIAS4. Enhances pancreatic beta-cell proliferation by converging with signaling by STAT5B and STAT3. ICA512-CCF located in the cytoplasm regulates dynamics and exocytosis of insulin secretory granules (SGs) by dimerizing with ICA512-TMF and displacing SNTB2 thus enhancing SGs mobility and exocytosis. In Rattus norvegicus (Rat), this protein is Receptor-type tyrosine-protein phosphatase-like N (Ptprn).